Here is a 393-residue protein sequence, read N- to C-terminus: tRNA(Met) cytidine acetate ligase (393 aa).

The ATP site is built by Gly-81, Asn-142, and Arg-167.

It belongs to the TmcAL family.

Its subcellular location is the cytoplasm. It catalyses the reaction cytidine(34) in elongator tRNA(Met) + acetate + ATP = N(4)-acetylcytidine(34) in elongator tRNA(Met) + AMP + diphosphate. Its function is as follows. Catalyzes the formation of N(4)-acetylcytidine (ac(4)C) at the wobble position of elongator tRNA(Met), using acetate and ATP as substrates. First activates an acetate ion to form acetyladenylate (Ac-AMP) and then transfers the acetyl group to tRNA to form ac(4)C34. The sequence is that of tRNA(Met) cytidine acetate ligase from Bacillus cereus (strain ATCC 10987 / NRS 248).